The sequence spans 150 residues: General odorant-binding protein 19d (150 aa).

Positions 1–23 are cleaved as a signal peptide; sequence MSHLVHLTVLLLVGILCLGATSA. 3 disulfides stabilise this stretch: C41–C72, C68–C126, and C116–C135.

It belongs to the PBP/GOBP family. Expressed in the antenna, mostly on the anterior surface of the third antennal segment. Also detected in the maxillary palps and in cells at the bases of the taste hairs on the proboscis and internal taste organs of the head.

It localises to the secreted. This is General odorant-binding protein 19d (Obp19d) from Drosophila melanogaster (Fruit fly).